The chain runs to 88 residues: Small ribosomal subunit protein uS15 (88 aa).

The protein belongs to the universal ribosomal protein uS15 family. In terms of assembly, part of the 30S ribosomal subunit. Forms a bridge to the 50S subunit in the 70S ribosome, contacting the 23S rRNA.

Its function is as follows. One of the primary rRNA binding proteins, it binds directly to 16S rRNA where it helps nucleate assembly of the platform of the 30S subunit by binding and bridging several RNA helices of the 16S rRNA. Forms an intersubunit bridge (bridge B4) with the 23S rRNA of the 50S subunit in the ribosome. This chain is Small ribosomal subunit protein uS15, found in Mycoplasmopsis synoviae (strain 53) (Mycoplasma synoviae).